Consider the following 495-residue polypeptide: Adenosylhomocysteinase (495 aa).

Residues T71, D156, and E218 each coordinate substrate. NAD(+) is bound at residue 219–221; the sequence is TTT. Substrate is bound by residues K248 and D252. Residues N253, 282 to 287, E305, N340, 361 to 363, and N409 contribute to the NAD(+) site; these read GYGDVG and IGH.

The protein belongs to the adenosylhomocysteinase family. Requires NAD(+) as cofactor.

Its subcellular location is the cytoplasm. The enzyme catalyses S-adenosyl-L-homocysteine + H2O = L-homocysteine + adenosine. It functions in the pathway amino-acid biosynthesis; L-homocysteine biosynthesis; L-homocysteine from S-adenosyl-L-homocysteine: step 1/1. In terms of biological role, may play a key role in the regulation of the intracellular concentration of adenosylhomocysteine. The polypeptide is Adenosylhomocysteinase (Mycobacterium bovis (strain ATCC BAA-935 / AF2122/97)).